The sequence spans 543 residues: MVRPQDTVAYEDLSEDYTQKKWKGLALSQRALHWNMMLENDRSMASLGRNMMESSELTPKQEIFKGSESSNSTSGGLFGVVPGGTETGDVCEDTFKELEGQPSNEEGSRLESDFLEIIDEDKKKSTKDRYEEYKEVEEHPPLSSSPVEHEGVLKGQKSYRCDECGKAFYWSSHLIGHRRIHTGEKPYECNECGKTFRQTSQLIVHLRTHTGEKPYECSECGKAYRHSSHLIQHQRLHNGEKPYKCNECAKAFNQSSKLFDHQRTHTGEKPYECKECGAAFSRSKNLVRHQFLHTGKKPYKCNECGRAFCSNRNLIDHQRTHTGEKPYKCNECGKAFSRSKCLIRHQSLHTGEKPYKCSECGKAFNQISQLVEHERIHTGEKPFKCSECGKAFGLSKCLIRHQRLHTSEKPYKCNECGKSFNQNSYLIIHQRIHTGEKPYECNECGKVFSYNSSLMVHQRTHTGEKPYKCNSCGKAFSDSSQLTVHQRVHTGEKNLMNVLSVGKPLVSVPLLITTSELMLERSPQVWLGHLLKAWFSETDSKDL.

Residues 8–82 (VAYEDLSEDY…TSGGLFGVVP (75 aa)) form the KRAB domain. Phosphoserine is present on Ser145. 12 C2H2-type zinc fingers span residues 159 to 181 (YRCD…RRIH), 187 to 209 (YECN…LRTH), 215 to 237 (YECS…QRLH), 243 to 265 (YKCN…QRTH), 271 to 293 (YECK…QFLH), 299 to 321 (YKCN…QRTH), 327 to 349 (YKCN…QSLH), 355 to 377 (YKCS…ERIH), 383 to 405 (FKCS…QRLH), 411 to 433 (YKCN…QRIH), 439 to 461 (YECN…QRTH), and 467 to 489 (YKCN…QRVH).

This sequence belongs to the krueppel C2H2-type zinc-finger protein family.

It is found in the nucleus. In terms of biological role, may be involved in transcriptional regulation. The protein is Zinc finger protein 852 (ZNF852) of Homo sapiens (Human).